The following is a 616-amino-acid chain: Chaperone protein HscA homolog (616 aa).

Belongs to the heat shock protein 70 family.

Functionally, chaperone involved in the maturation of iron-sulfur cluster-containing proteins. Has a low intrinsic ATPase activity which is markedly stimulated by HscB. This chain is Chaperone protein HscA homolog, found in Vibrio atlanticus (strain LGP32) (Vibrio splendidus (strain Mel32)).